The following is a 178-amino-acid chain: Signal peptidase complex subunit 2 (178 aa).

Topologically, residues 1–37 (MSSAKPINVYSIPELNQALDEALPSVFARLNYERSYA) are cytoplasmic. A helical membrane pass occupies residues 38-58 (LLDAKLYIGYSIAVVAGLSFF). Topologically, residues 59-67 (LDKKFERDQ) are lumenal. A helical transmembrane segment spans residues 68-88 (IVTYQKLLVGAYFVLSLLFWY). Topologically, residues 89-178 (FSRFIEKGTV…HNVLDTKKNE (90 aa)) are cytoplasmic.

This sequence belongs to the SPCS2 family. As to quaternary structure, component of the signal peptidase complex (SPC) composed of a catalytic subunit SEC11 and three accessory subunits SPC1, SPC2 and SPC3. The complex induces a local thinning of the ER membrane which is used to measure the length of the signal peptide (SP) h-region of protein substrates. This ensures the selectivity of the complex towards h-regions shorter than 18-20 amino acids. SPC associates with the translocon complex. Interacts with SBH1 and SEB2/SBH2.

The protein localises to the endoplasmic reticulum membrane. Component of the signal peptidase complex (SPC) which catalyzes the cleavage of N-terminal signal sequences from nascent proteins as they are translocated into the lumen of the endoplasmic reticulum. Enhances the enzymatic activity of SPC and facilitates the interactions between different components of the translocation site. This chain is Signal peptidase complex subunit 2 (SPC2), found in Saccharomyces cerevisiae (strain ATCC 204508 / S288c) (Baker's yeast).